A 498-amino-acid polypeptide reads, in one-letter code: Lysine--tRNA ligase (498 aa).

Mg(2+) contacts are provided by Glu-401 and Glu-408.

The protein belongs to the class-II aminoacyl-tRNA synthetase family. In terms of assembly, homodimer. It depends on Mg(2+) as a cofactor.

Its subcellular location is the cytoplasm. The catalysed reaction is tRNA(Lys) + L-lysine + ATP = L-lysyl-tRNA(Lys) + AMP + diphosphate. The chain is Lysine--tRNA ligase from Dehalococcoides mccartyi (strain CBDB1).